The following is a 333-amino-acid chain: Structure-specific endonuclease subunit SLX1 homolog (333 aa).

Residues 68-157 form the GIY-YIG domain; it reads DFFGVYCLLS…KSRRLRLLNL (90 aa). The SLX1-type zinc-finger motif lies at 237–293; sequence CSLCLKPILSISELLRCHANETCKSHFHMRCLSKHALNAVDEYRTSLFPIQGQCPKC.

This sequence belongs to the SLX1 family. As to quaternary structure, forms a heterodimer with a member of the SLX4 family. It depends on a divalent metal cation as a cofactor.

Its subcellular location is the nucleus. In terms of biological role, catalytic subunit of a heterodimeric structure-specific endonuclease that resolves DNA secondary structures generated during DNA repair and recombination. Has endonuclease activity towards branched DNA substrates, introducing single-strand cuts in duplex DNA close to junctions with ss-DNA. This is Structure-specific endonuclease subunit SLX1 homolog from Brugia malayi (Filarial nematode worm).